A 571-amino-acid polypeptide reads, in one-letter code: Proline--tRNA ligase (571 aa).

Belongs to the class-II aminoacyl-tRNA synthetase family. ProS type 1 subfamily. Homodimer.

The protein localises to the cytoplasm. It catalyses the reaction tRNA(Pro) + L-proline + ATP = L-prolyl-tRNA(Pro) + AMP + diphosphate. In terms of biological role, catalyzes the attachment of proline to tRNA(Pro) in a two-step reaction: proline is first activated by ATP to form Pro-AMP and then transferred to the acceptor end of tRNA(Pro). As ProRS can inadvertently accommodate and process non-cognate amino acids such as alanine and cysteine, to avoid such errors it has two additional distinct editing activities against alanine. One activity is designated as 'pretransfer' editing and involves the tRNA(Pro)-independent hydrolysis of activated Ala-AMP. The other activity is designated 'posttransfer' editing and involves deacylation of mischarged Ala-tRNA(Pro). The misacylated Cys-tRNA(Pro) is not edited by ProRS. The chain is Proline--tRNA ligase from Pseudomonas syringae pv. tomato (strain ATCC BAA-871 / DC3000).